The chain runs to 229 residues: Ribonuclease HII (229 aa).

One can recognise an RNase H type-2 domain in the interval 42–229; it reads TRIAGVDEVG…KPVHKILYQE (188 aa). A divalent metal cation-binding residues include Asp48, Glu49, and Asp139.

It belongs to the RNase HII family. Requires Mn(2+) as cofactor. It depends on Mg(2+) as a cofactor.

It localises to the cytoplasm. The catalysed reaction is Endonucleolytic cleavage to 5'-phosphomonoester.. Endonuclease that specifically degrades the RNA of RNA-DNA hybrids. This Ruegeria sp. (strain TM1040) (Silicibacter sp.) protein is Ribonuclease HII.